The chain runs to 274 residues: Formamidopyrimidine-DNA glycosylase (274 aa).

Proline 2 acts as the Schiff-base intermediate with DNA in catalysis. Residue glutamate 3 is the Proton donor of the active site. Lysine 60 acts as the Proton donor; for beta-elimination activity in catalysis. Positions 93 and 112 each coordinate DNA. An FPG-type zinc finger spans residues 240 to 274 (DVYGRKGETCRQCGTPITKTVVGGRGTHFCSVCQK). Residue arginine 264 is the Proton donor; for delta-elimination activity of the active site.

It belongs to the FPG family. As to quaternary structure, monomer. Requires Zn(2+) as cofactor.

It catalyses the reaction Hydrolysis of DNA containing ring-opened 7-methylguanine residues, releasing 2,6-diamino-4-hydroxy-5-(N-methyl)formamidopyrimidine.. It carries out the reaction 2'-deoxyribonucleotide-(2'-deoxyribose 5'-phosphate)-2'-deoxyribonucleotide-DNA = a 3'-end 2'-deoxyribonucleotide-(2,3-dehydro-2,3-deoxyribose 5'-phosphate)-DNA + a 5'-end 5'-phospho-2'-deoxyribonucleoside-DNA + H(+). Functionally, involved in base excision repair of DNA damaged by oxidation or by mutagenic agents. Acts as a DNA glycosylase that recognizes and removes damaged bases. Has a preference for oxidized purines, such as 7,8-dihydro-8-oxoguanine (8-oxoG). Has AP (apurinic/apyrimidinic) lyase activity and introduces nicks in the DNA strand. Cleaves the DNA backbone by beta-delta elimination to generate a single-strand break at the site of the removed base with both 3'- and 5'-phosphates. This Halalkalibacterium halodurans (strain ATCC BAA-125 / DSM 18197 / FERM 7344 / JCM 9153 / C-125) (Bacillus halodurans) protein is Formamidopyrimidine-DNA glycosylase (mutM).